The sequence spans 454 residues: Pyrrolysine--tRNA ligase (454 aa).

The disordered stretch occupies residues 102–138; sequence TRTKKAMPKSVARAPKPLENTEAAQAQPSGSKFSPAI. A compositionally biased stretch (polar residues) spans 123-133; it reads EAAQAQPSGSK.

It belongs to the class-II aminoacyl-tRNA synthetase family.

The protein localises to the cytoplasm. It catalyses the reaction tRNA(Pyl) + L-pyrrolysine + ATP = L-pyrrolysyl-tRNA(Pyl) + AMP + diphosphate. Catalyzes the attachment of pyrrolysine to tRNA(Pyl). Pyrrolysine is a lysine derivative encoded by the termination codon UAG. This is Pyrrolysine--tRNA ligase from Methanosarcina mazei (strain ATCC BAA-159 / DSM 3647 / Goe1 / Go1 / JCM 11833 / OCM 88) (Methanosarcina frisia).